The primary structure comprises 464 residues: MSLRFSSGSRHICLRSGTESVRPSSGGTGFAGSNVYGNSGAGCGFSYALGGGLGSLPGGDHAGGIPGSGTCVGFAGSEGGLFSGNEKVTMQNLNDRLASYLDNVRALEEANAELERKIKSWYEKHGPGSCHGLDHDYSRYHLTIEDLKNKIISSTTANANVILQIDNARLAADDFRLKYENELALHQNTEADINGLRRVLDELTLCRTDQELQYESLSEEMTYLKKNHEEEVKALQCVAGGNVNVEMNAAPGVDLTLLLNNMRAEYEDLAEQNRRDAEAWFNEKSASLQQQISDDAGAASSARGELTEMKRTVQTLDIELQSLLATKHSLECSLMETEGNYCAQLAQIQAQIGALEEQLHQVRTETEGQKLEYEQLLDIKVHLEKEIETYCRLIDGDRNSCSKSKGFGSGSPGNSSKDLSRTTLVKTVVEEIDQRGKVLSSRVQSIEEKTSKMTNGKTKQRVPF.

The tract at residues 1–85 (MSLRFSSGSR…GSEGGLFSGN (85 aa)) is head. The segment at 86–121 (EKVTMQNLNDRLASYLDNVRALEEANAELERKIKSW) is coil 1A. An IF rod domain is found at 86–401 (EKVTMQNLND…RLIDGDRNSC (316 aa)). The linker 1 stretch occupies residues 122 to 143 (YEKHGPGSCHGLDHDYSRYHLT). The coil 1B stretch occupies residues 144 to 235 (IEDLKNKIIS…KNHEEEVKAL (92 aa)). The tract at residues 236 to 258 (QCVAGGNVNVEMNAAPGVDLTLL) is linker 12. Residues 259-397 (LNNMRAEYED…ETYCRLIDGD (139 aa)) are coil 2. A tail region spans residues 398-464 (RNSCSKSKGF…NGKTKQRVPF (67 aa)). The segment covering 402–417 (SKSKGFGSGSPGNSSK) has biased composition (low complexity). Disordered regions lie at residues 402 to 422 (SKSKGFGSGSPGNSSKDLSRT) and 440 to 464 (SSRVQSIEEKTSKMTNGKTKQRVPF).

The protein belongs to the intermediate filament family. As to quaternary structure, heterotetramer of two type I and two type II keratins.

It localises to the cytoplasm. Its function is as follows. Essential for the proper assembly of types I and II keratin protein complexes and the formation of keratin intermediate filaments in the inner root sheath (irs). The chain is Keratin, type I cytoskeletal 28 from Bos taurus (Bovine).